Here is a 90-residue protein sequence, read N- to C-terminus: Small ribosomal subunit protein bS18 (90 aa).

The protein belongs to the bacterial ribosomal protein bS18 family. In terms of assembly, part of the 30S ribosomal subunit. Forms a tight heterodimer with protein bS6.

Binds as a heterodimer with protein bS6 to the central domain of the 16S rRNA, where it helps stabilize the platform of the 30S subunit. The protein is Small ribosomal subunit protein bS18 of Bordetella bronchiseptica (strain ATCC BAA-588 / NCTC 13252 / RB50) (Alcaligenes bronchisepticus).